The chain runs to 479 residues: Ribulose bisphosphate carboxylase large chain (479 aa).

The propeptide occupies 1-2 (MS). Residues N123 and T173 each contribute to the substrate site. Residue K175 is the Proton acceptor of the active site. K177 is a binding site for substrate. K201, D203, and E204 together coordinate Mg(2+). N6-carboxylysine is present on K201. A Phosphoserine modification is found at S208. The active-site Proton acceptor is H294. Positions 295 and 327 each coordinate substrate. At T330 the chain carries Phosphothreonine. Position 379 (S379) interacts with substrate.

It belongs to the RuBisCO large chain family. Type I subfamily. In terms of assembly, heterohexadecamer of 8 large chains and 8 small chains; disulfide-linked. The disulfide link is formed within the large subunit homodimers. Requires Mg(2+) as cofactor. Post-translationally, the disulfide bond which can form in the large chain dimeric partners within the hexadecamer appears to be associated with oxidative stress and protein turnover.

It localises to the plastid. It is found in the chloroplast. It carries out the reaction 2 (2R)-3-phosphoglycerate + 2 H(+) = D-ribulose 1,5-bisphosphate + CO2 + H2O. The enzyme catalyses D-ribulose 1,5-bisphosphate + O2 = 2-phosphoglycolate + (2R)-3-phosphoglycerate + 2 H(+). In terms of biological role, ruBisCO catalyzes two reactions: the carboxylation of D-ribulose 1,5-bisphosphate, the primary event in carbon dioxide fixation, as well as the oxidative fragmentation of the pentose substrate in the photorespiration process. Both reactions occur simultaneously and in competition at the same active site. The chain is Ribulose bisphosphate carboxylase large chain from Arabis hirsuta (Hairy rock-cress).